A 530-amino-acid chain; its full sequence is UDP-glucuronosyltransferase 2B17 (530 aa).

The signal sequence occupies residues 1-23 (MPGKWISALLLLQISCCFRSVKC). 2 N-linked (GlcNAc...) asparagine glycosylation sites follow: asparagine 316 and asparagine 483. A helical transmembrane segment spans residues 494–510 (VIGFLLSCVATTIVLSV).

Belongs to the UDP-glycosyltransferase family.

Its subcellular location is the endoplasmic reticulum membrane. It catalyses the reaction glucuronate acceptor + UDP-alpha-D-glucuronate = acceptor beta-D-glucuronoside + UDP + H(+). It carries out the reaction 17alpha-estradiol + UDP-alpha-D-glucuronate = 17alpha-estradiol 3-O-(beta-D-glucuronate) + UDP + H(+). The enzyme catalyses 17alpha-estradiol + UDP-alpha-D-glucuronate = 17alpha-estradiol 17-O-(beta-D-glucuronate) + UDP + H(+). The catalysed reaction is 17beta-estradiol + UDP-alpha-D-glucuronate = 17beta-estradiol 17-O-(beta-D-glucuronate) + UDP + H(+). It catalyses the reaction 17beta-hydroxy-5alpha-androstan-3-one + UDP-alpha-D-glucuronate = 5alpha-dihydrotestosterone 17-O-(beta-D-glucuronate) + UDP + H(+). It carries out the reaction testosterone + UDP-alpha-D-glucuronate = testosterone 17-O-(beta-D-glucuronate) + UDP + H(+). In terms of biological role, UDP-glucuronosyltransferase (UGT) that catalyzes phase II biotransformation reactions in which lipophilic substrates are conjugated with glucuronic acid to increase the metabolite's water solubility, thereby facilitating excretion into either the urine or bile. Catalyzes the glucuronidation of endogenous steroid hormones such as androgens (epitestosterone, androsterone) and estrogens (estradiol, epiestradiol). This chain is UDP-glucuronosyltransferase 2B17, found in Mus musculus (Mouse).